The following is a 102-amino-acid chain: Small ribosomal subunit protein uS10 (102 aa).

The protein belongs to the universal ribosomal protein uS10 family. As to quaternary structure, part of the 30S ribosomal subunit.

Its function is as follows. Involved in the binding of tRNA to the ribosomes. The sequence is that of Small ribosomal subunit protein uS10 from Sulfurihydrogenibium sp. (strain YO3AOP1).